The chain runs to 392 residues: Extracellular metalloproteinase 4 (392 aa).

Residues 1–9 constitute a propeptide that is removed on maturation; sequence VHSVVDYVS. 2 N-linked (GlcNAc...) asparagine glycosylation sites follow: Asn-27 and Asn-176. A Zn(2+)-binding site is contributed by His-193. The active site involves Glu-194. His-197 contacts Zn(2+). 2 N-linked (GlcNAc...) asparagine glycosylation sites follow: Asn-359 and Asn-385.

Belongs to the peptidase M36 family. It depends on Zn(2+) as a cofactor.

The protein resides in the secreted. In terms of biological role, secreted metalloproteinase probably acting as a virulence factor. The protein is Extracellular metalloproteinase 4 (MEP4) of Trichophyton violaceum.